A 394-amino-acid polypeptide reads, in one-letter code: MADGAGIDRKADEKIQFSTSKEVTVHPTFESMSLKESLLRGIYAYGYESPSAVQSRAIVQICKGRDTIAQAQSGTGKTATFSISMLQVIDTAVRETQALVLSPTRELATQIQSVVMALGDYMNVQCHACIGGTNVGEDIRKLDYGQHIVSGTPGRVADMIRRRHLRTRHIKMLVLDEADELLNQGFREQIYDVYRYLPPATQVVVVSATLPYDVLDMTTKFMTDPVRILVKRDELTLEGLKQYFIAVEKEDWKFDTLCDLYDTLTITQAVIFCNTRRKVDWLTDKMREANFTVSSMHGDMPQKERDSIMQDFRQGNSRVLISTDVWARGIDVQQVSLVINYDLPSNRENYIHRIGRSGRFGRKGVAINFVTSEDVRILRDIECMWLPSPCFSCG.

Positions 27–55 (PTFESMSLKESLLRGIYAYGYESPSAVQS) match the Q motif motif. The Helicase ATP-binding domain occupies 58-228 (IVQICKGRDT…TKFMTDPVRI (171 aa)). Residue 71-78 (AQSGTGKT) coordinates ATP. A DEAD box motif is present at residues 176-179 (DEAD). One can recognise a Helicase C-terminal domain in the interval 239–394 (GLKQYFIAVE…WLPSPCFSCG (156 aa)).

The protein belongs to the DEAD box helicase family. DDX48/FAL1 subfamily.

It localises to the nucleus. Its subcellular location is the nucleolus. The enzyme catalyses ATP + H2O = ADP + phosphate + H(+). In terms of biological role, ATP-dependent RNA helicase involved in 40S ribosomal subunit biogenesis. Required for the processing and cleavage of 35S pre-rRNA at sites A0, A1, and A2, leading to mature 18S rRNA. This is ATP-dependent RNA helicase FAL1 (FAL1) from Chaetomium globosum (strain ATCC 6205 / CBS 148.51 / DSM 1962 / NBRC 6347 / NRRL 1970) (Soil fungus).